The chain runs to 346 residues: Patr class I histocompatibility antigen, CH28 alpha chain (346 aa).

An N-terminal signal peptide occupies residues 1–21; the sequence is MAPRSLLLLFSGALALTETWA. The segment at 22-111 is alpha-1; the sequence is GSHSLRYFST…LLRRYNQSEA (90 aa). Topologically, residues 22-305 are extracellular; sequence GSHSLRYFST…EQSPQPTIPI (284 aa). Asn-107 carries an N-linked (GlcNAc...) asparagine glycan. The segment at 112–203 is alpha-2; that stretch reads GSHTLQGMNG…ENGKETLQRA (92 aa). 2 disulfides stabilise this stretch: Cys-122-Cys-185 and Cys-224-Cys-280. An alpha-3 region spans residues 204-295; it reads DPPKAHIAHH…GLPQPLTLRW (92 aa). The 89-residue stretch at 206–294 folds into the Ig-like C1-type domain; the sequence is PKAHIAHHPI…EGLPQPLTLR (89 aa). The connecting peptide stretch occupies residues 296-305; that stretch reads EQSPQPTIPI. A helical transmembrane segment spans residues 306 to 329; sequence VGIVAGLVVLGAVVTGAVVAAVMW. The Cytoplasmic segment spans residues 330-346; the sequence is RKKSSDRNRGSYSQAAV.

The protein belongs to the MHC class I family. Heterodimer of an alpha chain and a beta chain (beta-2-microglobulin).

It localises to the membrane. Involved in the presentation of foreign antigens to the immune system. The sequence is that of Patr class I histocompatibility antigen, CH28 alpha chain from Pan troglodytes (Chimpanzee).